Here is a 149-residue protein sequence, read N- to C-terminus: Nucleoside diphosphate kinase (149 aa).

ATP contacts are provided by Lys9, Phe57, Arg85, Thr91, Arg102, and Asn112. The active-site Pros-phosphohistidine intermediate is His115.

It belongs to the NDK family. As to quaternary structure, homotetramer. Requires Mg(2+) as cofactor.

Its subcellular location is the cytoplasm. The catalysed reaction is a 2'-deoxyribonucleoside 5'-diphosphate + ATP = a 2'-deoxyribonucleoside 5'-triphosphate + ADP. It catalyses the reaction a ribonucleoside 5'-diphosphate + ATP = a ribonucleoside 5'-triphosphate + ADP. In terms of biological role, major role in the synthesis of nucleoside triphosphates other than ATP. The ATP gamma phosphate is transferred to the NDP beta phosphate via a ping-pong mechanism, using a phosphorylated active-site intermediate. The polypeptide is Nucleoside diphosphate kinase (Nostoc punctiforme (strain ATCC 29133 / PCC 73102)).